The primary structure comprises 306 residues: Aspartate carbamoyltransferase catalytic subunit (306 aa).

Arg55 and Thr56 together coordinate carbamoyl phosphate. Residue Lys84 coordinates L-aspartate. Residues Arg105, His133, and Gln136 each coordinate carbamoyl phosphate. Residues Arg166 and Arg227 each contribute to the L-aspartate site. Positions 265 and 266 each coordinate carbamoyl phosphate.

The protein belongs to the aspartate/ornithine carbamoyltransferase superfamily. ATCase family. Heterododecamer (2C3:3R2) of six catalytic PyrB chains organized as two trimers (C3), and six regulatory PyrI chains organized as three dimers (R2).

It catalyses the reaction carbamoyl phosphate + L-aspartate = N-carbamoyl-L-aspartate + phosphate + H(+). Its pathway is pyrimidine metabolism; UMP biosynthesis via de novo pathway; (S)-dihydroorotate from bicarbonate: step 2/3. Functionally, catalyzes the condensation of carbamoyl phosphate and aspartate to form carbamoyl aspartate and inorganic phosphate, the committed step in the de novo pyrimidine nucleotide biosynthesis pathway. This Aeromonas salmonicida (strain A449) protein is Aspartate carbamoyltransferase catalytic subunit.